The primary structure comprises 682 residues: DNA-directed RNA polymerase subunit beta' (682 aa).

Cys69, Cys71, Cys87, and Cys90 together coordinate Zn(2+). Mg(2+) is bound by residues Asp489, Asp491, and Asp493.

The protein belongs to the RNA polymerase beta' chain family. RpoC1 subfamily. As to quaternary structure, in plastids the minimal PEP RNA polymerase catalytic core is composed of four subunits: alpha, beta, beta', and beta''. When a (nuclear-encoded) sigma factor is associated with the core the holoenzyme is formed, which can initiate transcription. Mg(2+) serves as cofactor. Requires Zn(2+) as cofactor.

Its subcellular location is the plastid. The protein localises to the chloroplast. The enzyme catalyses RNA(n) + a ribonucleoside 5'-triphosphate = RNA(n+1) + diphosphate. Functionally, DNA-dependent RNA polymerase catalyzes the transcription of DNA into RNA using the four ribonucleoside triphosphates as substrates. This is DNA-directed RNA polymerase subunit beta' from Platanus occidentalis (Sycamore).